The chain runs to 329 residues: 4-hydroxythreonine-4-phosphate dehydrogenase (329 aa).

Positions 136 and 137 each coordinate substrate. Residues histidine 166, histidine 211, and histidine 266 each coordinate a divalent metal cation. Substrate is bound by residues lysine 274, asparagine 283, and arginine 292.

This sequence belongs to the PdxA family. Homodimer. It depends on Zn(2+) as a cofactor. Requires Mg(2+) as cofactor. Co(2+) serves as cofactor.

It localises to the cytoplasm. The catalysed reaction is 4-(phosphooxy)-L-threonine + NAD(+) = 3-amino-2-oxopropyl phosphate + CO2 + NADH. It participates in cofactor biosynthesis; pyridoxine 5'-phosphate biosynthesis; pyridoxine 5'-phosphate from D-erythrose 4-phosphate: step 4/5. Functionally, catalyzes the NAD(P)-dependent oxidation of 4-(phosphooxy)-L-threonine (HTP) into 2-amino-3-oxo-4-(phosphooxy)butyric acid which spontaneously decarboxylates to form 3-amino-2-oxopropyl phosphate (AHAP). The chain is 4-hydroxythreonine-4-phosphate dehydrogenase from Escherichia fergusonii (strain ATCC 35469 / DSM 13698 / CCUG 18766 / IAM 14443 / JCM 21226 / LMG 7866 / NBRC 102419 / NCTC 12128 / CDC 0568-73).